The primary structure comprises 421 residues: MGRKPCCEKVGLRRGPWTSEEDQKLVSHITNNGLSCWRAIPKLAGLLRCGKSCRLRWTNYLRPDLKRGIFSEAEENLILDLHATLGNRWSRIAAQLPGRTDNEIKNYWNTRLKKRLRSQGLDPNTHLPLEDSKLDDTEDDTDDEGGDSSDVTMSDASKSEKRSKKKSKPKETVKVRQPKGPKPAPQLKMCQSDEGPVLLKVPKAPKSPISVNPGPGCNYDDDSEHSSSSTVTTKSHEDHRDSSDFIKALTSVSSFPEAELWSCIKPITNSFSSTALLSEWDSYRAFDSSLFPSSYPQLNSGLPKLEDVNSKSSAVASPVQGMLPAYNPMGMEMQTRMQFSSQLTHEIGQNYGGIFQETCYPQPDMGMSWSMHAELSHCGTESLFATPNPANAPSNFEEVPQPSPCTTSQELQRLAALLDLI.

HTH myb-type domains lie at 9–61 and 62–116; these read KVGL…TNYL and RPDL…KKRL. DNA-binding regions (H-T-H motif) lie at residues 37-61 and 89-112; these read WRAI…TNYL and WSRI…NTRL. A disordered region spans residues 119–240; that stretch reads QGLDPNTHLP…VTTKSHEDHR (122 aa). Residues 136–147 show a composition bias toward acidic residues; it reads DTEDDTDDEGGD.

Its subcellular location is the nucleus. Functionally, possible transcription activator. The chain is Myb-related protein Pp2 (PP2) from Physcomitrium patens (Spreading-leaved earth moss).